Here is a 385-residue protein sequence, read N- to C-terminus: Signal transduction histidine-protein kinase/phosphatase DegS (385 aa).

Residues 31 to 141 adopt a coiled-coil conformation; that stretch reads QIGEQSRQQY…IERSESLVSQ (111 aa). Phosphoserine is present on serine 76. The region spanning 183–385 is the Histidine kinase domain; that stretch reads RVSREIHDGP…FIMIKVPLSL (203 aa). Phosphohistidine; by autocatalysis is present on histidine 189.

Autophosphorylated. Phosphorylated in vitro at Ser-76 by the serine/threonine-protein kinase YbdM, which stimulates the phosphate transfer to DegU.

It localises to the cytoplasm. The catalysed reaction is ATP + protein L-histidine = ADP + protein N-phospho-L-histidine.. Its activity is regulated as follows. Regulated via serine phosphorylation of its input domain. Phosphotransfer from DegS to DegU is stimulated by phosphorylation on Ser-76 and by DegQ. Its function is as follows. Member of the two-component regulatory system DegS/DegU, which plays an important role in the transition growth phase. Involved in the control of expression of different cellular functions, including production of degradative enzymes such as the neutral and alkaline proteases, flagellum formation and biofilm formation. Acts both as a protein kinase that undergoes autophosphorylation and subsequently transfers the phosphate to DegU, and as a protein phosphatase that dephosphorylates phospho-DegU. This Bacillus subtilis (strain 168) protein is Signal transduction histidine-protein kinase/phosphatase DegS (degS).